Reading from the N-terminus, the 700-residue chain is Calpain-2 catalytic subunit (700 aa).

The propeptide at 2 to 19 (AGMAAALAKERAAAAGAG) is anchors to the small subunit. Residues 45-344 (LFHDPSFPAG…YSRLEICNLT (300 aa)) form the Calpain catalytic domain. Positions 91 and 96 each coordinate Ca(2+). Residue Cys-105 is part of the active site. Ca(2+) is bound by residues Glu-175, Gln-229, and Lys-230. Active-site residues include His-262 and Asn-286. Ca(2+) contacts are provided by Glu-292, Asp-299, and Glu-323. The domain III stretch occupies residues 345–514 (PDTLASDRYK…KNANSTVIDD (170 aa)). Residues 515-529 (EIEANFEETEIDEDD) are linker. The segment at 530 to 700 (IEPSFKKLFG…LINWLFFTVI (171 aa)) is domain IV. Residues Ala-542, Asp-545, Glu-547, Glu-552, Asp-585, Asp-587, Ser-589, Lys-591, Glu-596, Asp-615, Asp-617, Ser-619, Thr-621, Glu-626, Asp-658, and Asn-661 each coordinate Ca(2+). EF-hand domains lie at 572–605 (FSIE…TKIQ) and 602–637 (TKIQ…AGFK). The region spanning 667-700 (IRLETLYKMFRKLDTEKTGTIELNLINWLFFTVI) is the EF-hand 3 domain.

The protein belongs to the peptidase C2 family. In terms of assembly, forms a heterodimer with a small (regulatory) subunit (CAPNS1). Ca(2+) serves as cofactor. As to expression, ubiquitous.

The protein localises to the cytoplasm. It localises to the cell membrane. The catalysed reaction is Broad endopeptidase specificity.. Activated by 200-1000 micromolar concentrations of calcium and inhibited by calpastatin. Its function is as follows. Calcium-regulated non-lysosomal thiol-protease which catalyze limited proteolysis of substrates involved in cytoskeletal remodeling and signal transduction. The chain is Calpain-2 catalytic subunit (CAPN2) from Gallus gallus (Chicken).